The chain runs to 119 residues: Phospholipase A2 A2-actitoxin-Cgg2a (119 aa).

Cystine bridges form between Cys-25–Cys-119, Cys-27–Cys-43, Cys-42–Cys-101, Cys-49–Cys-94, Cys-61–Cys-87, and Cys-78–Cys-92. Residues Gly-28 and Gly-30 each contribute to the Ca(2+) site. His-46 is an active-site residue. Asp-47 contacts Ca(2+). Residue Asp-95 is part of the active site.

The protein belongs to the phospholipase A2 family. In terms of assembly, homodimer. Ca(2+) is required as a cofactor.

It localises to the secreted. The protein localises to the nematocyst. The enzyme catalyses a 1,2-diacyl-sn-glycero-3-phosphocholine + H2O = a 1-acyl-sn-glycero-3-phosphocholine + a fatty acid + H(+). Its function is as follows. Sea anemone phospholipase A2 (PLA2). When incubated with plasma, this protein shows a moderate anticoagulant activity (0.15 ug of enzyme/200 uL of plasma), inhibiting clotting induced by thrombin. This enzyme also induces myotoxicity, and edema. PLA2 catalyzes the calcium-dependent hydrolysis of the 2-acyl groups in 3-sn-phosphoglycerides. In Condylactis gigantea (Giant Caribbean anemone), this protein is Phospholipase A2 A2-actitoxin-Cgg2a.